Reading from the N-terminus, the 154-residue chain is Spermatogenesis-associated protein 19, mitochondrial (154 aa).

The N-terminal 24 residues, 1-24, are a transit peptide targeting the mitochondrion; the sequence is MIITTWIMYIFARKTVGLPFPPRV. A phosphoserine mark is found at S26 and S116.

Expressed specifically in adult testis (at protein level).

The protein localises to the mitochondrion outer membrane. The protein resides in the mitochondrion. Its subcellular location is the cell projection. It is found in the cilium. It localises to the flagellum. Functionally, essential for sperm motility and male fertility. Plays an important role in sperm motility by regulating the organization and function of the mitochondria and is also required for correct sperm midpiece assembly. In Mus musculus (Mouse), this protein is Spermatogenesis-associated protein 19, mitochondrial (Spata19).